The sequence spans 201 residues: MLEVLKTFAVLYVGLFAITNPVGAVPIFMGVVSHLAPDKRHEVAEKVSITVLVTLLTFALVGKWIFKFFGSSVDAFAIAGGILLFRMGMEMLSGKLSSVKIDEEDVTLEEVAVIPLAIPLISGPGAITTVMLYMTRESPPIVIATIIAIGISVYIILASGNKIIEKLGRVGIKVTTRMMGLILTSMAIQMIINGIKGAFGI.

The next 6 membrane-spanning stretches (helical) occupy residues 8-28, 49-69, 73-93, 111-131, 140-160, and 181-201; these read FAVL…VPIF, ITVL…FKFF, VDAF…EMLS, VAVI…TTVM, PIVI…LASG, and LILT…AFGI.

Belongs to the UPF0056 (MarC) family.

The protein localises to the cell membrane. This Pyrococcus abyssi (strain GE5 / Orsay) protein is UPF0056 membrane protein PYRAB13050.